We begin with the raw amino-acid sequence, 889 residues long: 97 kDa heat shock protein (889 aa).

Disordered stretches follow at residues 504–622 (EDAM…ATTD) and 812–889 (FVCD…MELD). Residues 549–585 (SADKEEQADNGSKETSKDSKDQTSESSKSDKESKDQN) show a composition bias toward basic and acidic residues. Polar residues predominate over residues 586 to 597 (SEGSKSDNSSTE). Residues 869–889 (ASKEGETKPDETKPDVEMELD) are compositionally biased toward basic and acidic residues.

This sequence belongs to the heat shock protein 70 family.

Functionally, cell surface recognition protein that binds acrosome-reacted sperm and thereby mediates binding and subsequent fusion of the sperm and egg. The chain is 97 kDa heat shock protein from Strongylocentrotus purpuratus (Purple sea urchin).